A 178-amino-acid polypeptide reads, in one-letter code: ATP synthase subunit b, chloroplastic (178 aa).

A helical membrane pass occupies residues 26–46; sequence TNLINIIILLIILFYFLKGLL.

It belongs to the ATPase B chain family. F-type ATPases have 2 components, F(1) - the catalytic core - and F(0) - the membrane proton channel. F(1) has five subunits: alpha(3), beta(3), gamma(1), delta(1), epsilon(1). F(0) has four main subunits: a(1), b(1), b'(1) and c(10-14). The alpha and beta chains form an alternating ring which encloses part of the gamma chain. F(1) is attached to F(0) by a central stalk formed by the gamma and epsilon chains, while a peripheral stalk is formed by the delta, b and b' chains.

It localises to the plastid. Its subcellular location is the chloroplast thylakoid membrane. F(1)F(0) ATP synthase produces ATP from ADP in the presence of a proton or sodium gradient. F-type ATPases consist of two structural domains, F(1) containing the extramembraneous catalytic core and F(0) containing the membrane proton channel, linked together by a central stalk and a peripheral stalk. During catalysis, ATP synthesis in the catalytic domain of F(1) is coupled via a rotary mechanism of the central stalk subunits to proton translocation. Its function is as follows. Component of the F(0) channel, it forms part of the peripheral stalk, linking F(1) to F(0). This chain is ATP synthase subunit b, chloroplastic, found in Vaucheria litorea (Yellow-green alga).